Consider the following 157-residue polypeptide: CAPA peptides (157 aa).

The signal sequence occupies residues 1–21 (MQPTMRIIVSMALLAYAVASA). A propeptide spanning residues 22 to 28 (YHSNVKL) is cleaved from the precursor. Valine amide is present on Val42. Positions 45–66 (ASGNTWQLPLNDLYPEYEPAQV) are excised as a propeptide. Pyrrolidone carboxylic acid; partial is present on Gln69. Val76 is subject to Valine amide. Leucine amide is present on residues Leu85 and Leu117. The propeptide occupies 120–157 (AFKNDDDEITIQNESNDHSEPEQTELIHEDRRKRQTLN). The disordered stretch occupies residues 131 to 157 (QNESNDHSEPEQTELIHEDRRKRQTLN). Residues 134-151 (SNDHSEPEQTELIHEDRR) are compositionally biased toward basic and acidic residues.

Belongs to the pyrokinin family. CAPA-periviscerokinin 1: Expressed in corpora cardiaca (CC), corpora allata (CA), antennal lobe (AL) and gnathal ganglion (GNG) (at protein level). Expression detected in most animals in CC and CA and in some animals in AL and GNG (at protein level). CAPA-periviscerokinin 2: Expressed in corpora cardiaca (CC), corpora allata (CA), antennal lobe (AL) and gnathal ganglion (GNG) (at protein level). For non-pyroglutamate form, expression in AL detected in all animals, in CC, CA and GNG in most animals (at protein level). For pyroglutamate form, expression in CC and CA detected in most animals, in AL and GNG in some animals (at protein level). CAPA-periviscerokinin 3: Expressed in corpora cardiaca (CC), corpora allata (CA), antennal lobe (AL) and gnathal ganglion (GNG). Expression detected in most animals in CC and CA and in some animals in AL and GNG (at protein level). CAPA-precursor-related peptide 3: Expressed in corpora cardiaca (CC), corpora allata (CA), antennal lobe (AL) and gnathal ganglion (GNG) (at protein level). Expression in CC and CA detected in some animals, expression in Al and GNG detected in few animals (at protein level). CAPA-trypto-pyrokinin: Expressed in corpora cardiaca (CC), corpora allata (CA), antennal lobe (AL) and gnathal ganglion (GNG) (at protein level). Expression in CC, CA and GNG detected in most animals, in AL in some animals (at protein level).

The protein resides in the secreted. Myoactive. The sequence is that of CAPA peptides from Agrotis ipsilon (Black cutworm moth).